The following is a 360-amino-acid chain: Chorismate synthase (360 aa).

Residues arginine 48 and arginine 54 each contribute to the NADP(+) site. FMN-binding positions include 125–127, 246–247, glycine 286, 301–305, and arginine 327; these read RSS, NA, and KPTSS.

The protein belongs to the chorismate synthase family. Homotetramer. FMNH2 is required as a cofactor.

It catalyses the reaction 5-O-(1-carboxyvinyl)-3-phosphoshikimate = chorismate + phosphate. It participates in metabolic intermediate biosynthesis; chorismate biosynthesis; chorismate from D-erythrose 4-phosphate and phosphoenolpyruvate: step 7/7. In terms of biological role, catalyzes the anti-1,4-elimination of the C-3 phosphate and the C-6 proR hydrogen from 5-enolpyruvylshikimate-3-phosphate (EPSP) to yield chorismate, which is the branch point compound that serves as the starting substrate for the three terminal pathways of aromatic amino acid biosynthesis. This reaction introduces a second double bond into the aromatic ring system. The protein is Chorismate synthase of Haemophilus ducreyi (strain 35000HP / ATCC 700724).